The primary structure comprises 325 residues: Delta(1)-pyrroline-2-carboxylate reductase (325 aa).

Belongs to the ornithine cyclodeaminase/mu-crystallin family.

The enzyme catalyses L-proline + NAD(+) = 1-pyrroline-2-carboxylate + NADH + H(+). The catalysed reaction is L-proline + NADP(+) = 1-pyrroline-2-carboxylate + NADPH + H(+). Functionally, catalyzes the reduction of Delta(1)-pyrroline-2-carboxylate (Pyr2C) to L-proline, using preferentially NADPH over NADH as the electron donor. Is likely involved in a degradation pathway that converts trans-3-hydroxy-L-proline (t3LHyp) to L-proline. The chain is Delta(1)-pyrroline-2-carboxylate reductase from Bacillus thuringiensis subsp. konkukian (strain 97-27).